A 113-amino-acid polypeptide reads, in one-letter code: Iron-sulfur cluster insertion protein ErpA (113 aa).

Residues Cys41, Cys105, and Cys107 each contribute to the iron-sulfur cluster site.

This sequence belongs to the HesB/IscA family. Homodimer. The cofactor is iron-sulfur cluster.

Its function is as follows. Required for insertion of 4Fe-4S clusters for at least IspG. This is Iron-sulfur cluster insertion protein ErpA from Histophilus somni (strain 129Pt) (Haemophilus somnus).